A 264-amino-acid polypeptide reads, in one-letter code: 3-methyl-2-oxobutanoate hydroxymethyltransferase (264 aa).

Residues D45 and D84 each coordinate Mg(2+). 3-methyl-2-oxobutanoate contacts are provided by residues 45-46, D84, and K112; that span reads DS. E114 contacts Mg(2+). E181 acts as the Proton acceptor in catalysis.

It belongs to the PanB family. As to quaternary structure, homodecamer; pentamer of dimers. Mg(2+) is required as a cofactor.

It localises to the cytoplasm. The catalysed reaction is 3-methyl-2-oxobutanoate + (6R)-5,10-methylene-5,6,7,8-tetrahydrofolate + H2O = 2-dehydropantoate + (6S)-5,6,7,8-tetrahydrofolate. It participates in cofactor biosynthesis; (R)-pantothenate biosynthesis; (R)-pantoate from 3-methyl-2-oxobutanoate: step 1/2. Catalyzes the reversible reaction in which hydroxymethyl group from 5,10-methylenetetrahydrofolate is transferred onto alpha-ketoisovalerate to form ketopantoate. This is 3-methyl-2-oxobutanoate hydroxymethyltransferase from Escherichia coli O1:K1 / APEC.